Reading from the N-terminus, the 107-residue chain is U1-lycotoxin-Ls1b (107 aa).

The signal sequence occupies residues 1-20 (MMKVLVVVALLVTLISYSSS). A propeptide spanning residues 21-41 (EGIDDLEADELLSLMADEQTR) is cleaved from the precursor. 4 disulfides stabilise this stretch: C44/C59, C51/C68, C58/C86, and C70/C84.

The protein belongs to the neurotoxin 19 (CSTX) family. 04 (U1-Lctx) subfamily. Expressed by the venom gland.

The protein localises to the secreted. The chain is U1-lycotoxin-Ls1b from Lycosa singoriensis (Wolf spider).